We begin with the raw amino-acid sequence, 91 residues long: MTLFSSISSISNPMTSSKSSIASFGSGTSMGSNSIACGGGCGGSDGILGLGLGLSLGLGLGLNLTGGSRSRGGCGGSNGSMGGGNGSCCGI.

Disordered stretches follow at residues 1–20 (MTLFSSISSISNPMTSSKSS) and 72–91 (GGCGGSNGSMGGGNGSCCGI).

It belongs to the hssA/B family.

The chain is HssA/B-like protein 52 (hssl52) from Dictyostelium discoideum (Social amoeba).